We begin with the raw amino-acid sequence, 227 residues long: Translation initiation factor 6 (227 aa).

The protein belongs to the eIF-6 family.

In terms of biological role, binds to the 50S ribosomal subunit and prevents its association with the 30S ribosomal subunit to form the 70S initiation complex. This is Translation initiation factor 6 from Methanococcus vannielii (strain ATCC 35089 / DSM 1224 / JCM 13029 / OCM 148 / SB).